The sequence spans 446 residues: Tetratricopeptide repeat protein 23 (446 aa).

5 TPR repeats span residues 45-78, 137-170, 186-219, 310-347, and 356-389; these read LRLS…TRIC, VELF…SKEM, ARIK…TEIS, TAKF…KVAV, and AETY…QTLL. Positions 410–446 are disordered; the sequence is APEVPARPRPSPGAKAAFCAGGRPYSVPGRTRPSAAD.

In terms of assembly, associated with the EvC complex composed of EFCAB7, IQCE, EVC2 and EVC.

The protein localises to the cell projection. Its subcellular location is the cilium. In terms of biological role, participates positively in the ciliary Hedgehog (Hh) signaling. The sequence is that of Tetratricopeptide repeat protein 23 (TTC23) from Bos taurus (Bovine).